A 784-amino-acid chain; its full sequence is Toll-like receptor 2 (784 aa).

A signal peptide spans 1 to 20; that stretch reads MPHTLWMVWVLGVIISLSKE. At 21–587 the chain is on the extracellular side; it reads ESSNQASLSC…VRLSVSECHR (567 aa). C30 and C36 form a disulfide bridge. 19 LRR repeats span residues 54 to 77, 78 to 101, 102 to 125, 126 to 150, 151 to 175, 176 to 199, 200 to 223, 224 to 250, 251 to 278, 279 to 308, 309 to 337, 338 to 361, 362 to 388, 389 to 414, 415 to 437, 438 to 457, 458 to 478, 479 to 500, and 501 to 524; these read VKCL…RYVN, LQAL…SLGR, LEHL…PLSS, LKFL…HLTK, LRIL…GLTF, LEEL…SIQN, VSHL…LTSS, VECL…TNSL, IKKF…QISG, LLEL…DPGK, VETL…LTER, VKRI…HLKS, LEYL…AWPS, LQTL…TLKN, LTNL…WPEK, MKYL…CIPK, TLEI…NLPQ, LKEL…LLPM, and LLVL…SFHT. The N-linked (GlcNAc...) asparagine glycan is linked to N114. A glycan (N-linked (GlcNAc...) asparagine) is linked at N199. Residues C353 and C382 are joined by a disulfide bond. N414 carries N-linked (GlcNAc...) asparagine glycosylation. C432 and C454 are disulfide-bonded. An N-linked (GlcNAc...) asparagine glycan is attached at N442. One can recognise an LRRCT domain in the interval 525–579; sequence LKTLEAGGNNFICSCEFLSFTQEQQALAKVLVDWPANYLCDSPSHVRGQRVQDVR. Residues 588–608 traverse the membrane as a helical segment; it reads AALVSGMCCALFLLILLMGVL. Over 609 to 784 the chain is Cytoplasmic; sequence CHRFHGLWYM…WVNLRAAIKS (176 aa). The TIR domain maps to 639–782; it reads ICYDAFVSYS…GFWVNLRAAI (144 aa). Residue K754 forms a Glycyl lysine isopeptide (Lys-Gly) (interchain with G-Cter in ubiquitin) linkage. Residues 761–778 carry the ATG16L1-binding motif motif; it reads YLEWPMDEARQEGFWVNL.

The protein belongs to the Toll-like receptor family. In terms of assembly, interacts with LY96, TLR1 and TLR6 (via extracellular domain). TLR2 seems to exist in heterodimers with either TLR1 or TLR6 before stimulation by the ligand. The heterodimers form bigger oligomers in response to their corresponding ligands as well as further heterotypic associations with other receptors such as CD14 and/or CD36. Binds MYD88 (via TIR domain). Interacts with TICAM1. Interacts with CNPY3. Interacts with ATG16L1. Interacts with PPP1R11. Interacts with TICAM2. Interacts with TIRAP. In terms of processing, ubiquitinated at Lys-754 by PPP1R11, leading to its degradation. Deubiquitinated by USP2. Glycosylation of Asn-442 is critical for secretion of the N-terminal ectodomain of TLR2.

It localises to the membrane. The protein localises to the cytoplasmic vesicle. The protein resides in the phagosome membrane. It is found in the membrane raft. Its function is as follows. Cooperates with LY96 to mediate the innate immune response to bacterial lipoproteins and other microbial cell wall components. Cooperates with TLR1 or TLR6 to mediate the innate immune response to bacterial lipoproteins or lipopeptides. Acts via MYD88 and TRAF6, leading to NF-kappa-B activation, cytokine secretion and the inflammatory response. May also promote apoptosis in response to lipoproteins. Forms activation clusters composed of several receptors depending on the ligand, these clusters trigger signaling from the cell surface and subsequently are targeted to the Golgi in a lipid-raft dependent pathway. Forms the cluster TLR2:TLR6:CD14:CD36 in response to diacylated lipopeptides and TLR2:TLR1:CD14 in response to triacylated lipopeptides. In Macaca mulatta (Rhesus macaque), this protein is Toll-like receptor 2 (TLR2).